Here is a 685-residue protein sequence, read N- to C-terminus: DNA ligase (685 aa).

NAD(+) is bound by residues 34–38 (DAVFD), 83–84 (SL), and E113. The active-site N6-AMP-lysine intermediate is K115. Positions 136, 173, 297, and 321 each coordinate NAD(+). Positions 415, 418, 433, and 438 each coordinate Zn(2+). The BRCT domain maps to 607-685 (QEKLQFSGKT…EQELMTLISN (79 aa)).

The protein belongs to the NAD-dependent DNA ligase family. LigA subfamily. Mg(2+) serves as cofactor. The cofactor is Mn(2+).

The enzyme catalyses NAD(+) + (deoxyribonucleotide)n-3'-hydroxyl + 5'-phospho-(deoxyribonucleotide)m = (deoxyribonucleotide)n+m + AMP + beta-nicotinamide D-nucleotide.. Its function is as follows. DNA ligase that catalyzes the formation of phosphodiester linkages between 5'-phosphoryl and 3'-hydroxyl groups in double-stranded DNA using NAD as a coenzyme and as the energy source for the reaction. It is essential for DNA replication and repair of damaged DNA. The protein is DNA ligase of Prochlorococcus marinus (strain SARG / CCMP1375 / SS120).